The following is a 257-amino-acid chain: Adenosylcobinamide-GDP ribazoletransferase (257 aa).

Helical transmembrane passes span Ile30 to Ile50, Met52 to Thr72, Ser109 to Ser129, Ser132 to Tyr152, Leu175 to Leu195, Asn198 to Phe218, and Gly237 to Phe257.

The protein belongs to the CobS family. The cofactor is Mg(2+).

It localises to the cell membrane. It carries out the reaction alpha-ribazole + adenosylcob(III)inamide-GDP = adenosylcob(III)alamin + GMP + H(+). The catalysed reaction is alpha-ribazole 5'-phosphate + adenosylcob(III)inamide-GDP = adenosylcob(III)alamin 5'-phosphate + GMP + H(+). The protein operates within cofactor biosynthesis; adenosylcobalamin biosynthesis; adenosylcobalamin from cob(II)yrinate a,c-diamide: step 7/7. Functionally, joins adenosylcobinamide-GDP and alpha-ribazole to generate adenosylcobalamin (Ado-cobalamin). Also synthesizes adenosylcobalamin 5'-phosphate from adenosylcobinamide-GDP and alpha-ribazole 5'-phosphate. In Clostridioides difficile (strain 630) (Peptoclostridium difficile), this protein is Adenosylcobinamide-GDP ribazoletransferase.